We begin with the raw amino-acid sequence, 144 residues long: Bacilliredoxin BCE_2233 (144 aa).

It belongs to the bacilliredoxin family.

The polypeptide is Bacilliredoxin BCE_2233 (Bacillus cereus (strain ATCC 10987 / NRS 248)).